Here is a 708-residue protein sequence, read N- to C-terminus: G-box-binding factor (708 aa).

Disordered stretches follow at residues 1 to 29 (MLST…GSDL) and 123 to 339 (QQAQ…QTIP). 3 stretches are compositionally biased toward low complexity: residues 11-21 (SSSSSSSSSPS), 123-219 (QQAQ…QHHQ), and 227-316 (SQPQ…SPST). Residues 324–333 (ETSNSEKKDS) are compositionally biased toward basic and acidic residues. Tandem repeats lie at residues 339–368 (PKCT…AFTP) and 481–510 (PPCP…PFTP). Residues 511–604 (VGAGLSPSSS…PTYSPNPSLP (94 aa)) form a disordered region. Residues 516–590 (SPSSSPSSPK…SSISQSPLQL (75 aa)) show a composition bias toward low complexity. The segment covering 591–600 (NYQTPTYSPN) has biased composition (polar residues).

It is found in the nucleus. Its function is as follows. cAMP-responsive transcriptional activator regulating late gene expression. Essential component of the developmental switch between early and late development. Binds to a number of CA/GT-rich gene regulatory elements. The chain is G-box-binding factor (gbfA) from Dictyostelium discoideum (Social amoeba).